The chain runs to 159 residues: SsrA-binding protein (159 aa).

It belongs to the SmpB family.

Its subcellular location is the cytoplasm. Required for rescue of stalled ribosomes mediated by trans-translation. Binds to transfer-messenger RNA (tmRNA), required for stable association of tmRNA with ribosomes. tmRNA and SmpB together mimic tRNA shape, replacing the anticodon stem-loop with SmpB. tmRNA is encoded by the ssrA gene; the 2 termini fold to resemble tRNA(Ala) and it encodes a 'tag peptide', a short internal open reading frame. During trans-translation Ala-aminoacylated tmRNA acts like a tRNA, entering the A-site of stalled ribosomes, displacing the stalled mRNA. The ribosome then switches to translate the ORF on the tmRNA; the nascent peptide is terminated with the 'tag peptide' encoded by the tmRNA and targeted for degradation. The ribosome is freed to recommence translation, which seems to be the essential function of trans-translation. In Coxiella burnetii (strain RSA 493 / Nine Mile phase I), this protein is SsrA-binding protein.